Reading from the N-terminus, the 282-residue chain is Pantothenate synthetase (282 aa).

An ATP-binding site is contributed by 30-37 (MGYFHEGH). His37 serves as the catalytic Proton donor. Residue Gln61 coordinates (R)-pantoate. Gln61 lines the beta-alanine pocket. 147 to 150 (GQKD) provides a ligand contact to ATP. Position 153 (Gln153) interacts with (R)-pantoate. ATP is bound by residues Val176 and 184-187 (LSSR).

This sequence belongs to the pantothenate synthetase family. Homodimer.

It is found in the cytoplasm. The enzyme catalyses (R)-pantoate + beta-alanine + ATP = (R)-pantothenate + AMP + diphosphate + H(+). It participates in cofactor biosynthesis; (R)-pantothenate biosynthesis; (R)-pantothenate from (R)-pantoate and beta-alanine: step 1/1. Catalyzes the condensation of pantoate with beta-alanine in an ATP-dependent reaction via a pantoyl-adenylate intermediate. This is Pantothenate synthetase from Maridesulfovibrio salexigens (strain ATCC 14822 / DSM 2638 / NCIMB 8403 / VKM B-1763) (Desulfovibrio salexigens).